A 684-amino-acid polypeptide reads, in one-letter code: Acetyl-coenzyme A synthetase 2 (684 aa).

Residues 207–210 (RGGK) and Thr-326 each bind CoA. Residues 402-404 (GEP), 426-431 (DTMWQT), Asp-517, and Arg-532 contribute to the ATP site. Ser-540 serves as a coordination point for CoA. Arg-543 contacts ATP. A CoA-binding site is contributed by Arg-613.

Belongs to the ATP-dependent AMP-binding enzyme family.

It carries out the reaction acetate + ATP + CoA = acetyl-CoA + AMP + diphosphate. The polypeptide is Acetyl-coenzyme A synthetase 2 (ACS2) (Kluyveromyces lactis (strain ATCC 8585 / CBS 2359 / DSM 70799 / NBRC 1267 / NRRL Y-1140 / WM37) (Yeast)).